The following is a 653-amino-acid chain: MDRGVLPLPITLLFVIYSFVPTTGLAERVGCDLQPVDPTRGEVTFTTSQVSEGCVAQAANAVREVHVLFLDFPGMLSHLELTLQASKQNGTETQEVFLVLVSNKNVFVKFQAPEIPLHLAYDSSLVIFQGQPRVNITVLPSLTSRKQILDWAATKGAITSIAALDDPQSIVLQLGQDPKAPFLCLPEAHKDMGATLEWQPRAQTPVQSCRLEGVSGHKEAYILRILPGSEAGPRTVTVMMELSCTSGDAILILHGPPYVSWFIDINHSMQILTTGEYSVKIFPGSKVKGVELPDTPQGLIAEARKLNASIVTSFVELPLVSNVSLRASSCGGVFQTTPAPVVTTPPKDTCSPVLLMSLIQPKCGNQVMTLALNKKHVQTLQCTITGLTFWDSSCQAEDTDDHLVLSSAYSSCGMKVTAHVVSNEVIISFPSGSPPLRKKVQCIDMDSLSFQLGLYLSPHFLQASNTIELGQQAFVQVSVSPLTSEVTVQLDSCHLDLGPEGDMVELIQSRTAKGSCVTLLSPSPEGDPRFSFLLRVYMVPTPTAGTLSCNLALRPSTLSQEVYKTVSMRLNIVSPDLSGKGLVLPSVLGITFGAFLIGALLTAALWYIYSHTRGPSKREPVVAVAAPASSESSSTNHSIGSTQSTPCSTSSMA.

An N-terminal signal peptide occupies residues 1 to 26 (MDRGVLPLPITLLFVIYSFVPTTGLA). Positions 27-47 (ERVGCDLQPVDPTRGEVTFTT) are OR1, N-terminal part. The required for interaction with GDF2 stretch occupies residues 27–337 (ERVGCDLQPV…SSCGGVFQTT (311 aa)). Residues 27–581 (ERVGCDLQPV…IVSPDLSGKG (555 aa)) lie on the Extracellular side of the membrane. 7 cysteine pairs are disulfide-bonded: Cys-31-Cys-209, Cys-54-Cys-184, Cys-244-Cys-330, Cys-350-Cys-382, Cys-363-Cys-442, Cys-394-Cys-412, and Cys-493-Cys-549. An OR2 region spans residues 48 to 201 (SQVSEGCVAQ…MGATLEWQPR (154 aa)). 3 N-linked (GlcNAc...) asparagine glycosylation sites follow: Asn-89, Asn-135, and Asn-266. An OR1, C-terminal part region spans residues 202–330 (AQTPVQSCRL…SNVSLRASSC (129 aa)). An essential for interaction with GDF2 region spans residues 270-282 (QILTTGEYSVKIF). N-linked (GlcNAc...) asparagine glycans are attached at residues Asn-307 and Asn-322. The ZP domain occupies 363–510 (CGNQVMTLAL…GDMVELIQSR (148 aa)). The chain crosses the membrane as a helical span at residues 582–606 (LVLPSVLGITFGAFLIGALLTAALW). Topologically, residues 607–653 (YIYSHTRGPSKREPVVAVAAPASSESSSTNHSIGSTQSTPCSTSSMA) are cytoplasmic. Residues 624–634 (VAAPASSESSS) show a composition bias toward low complexity. Positions 624-653 (VAAPASSESSSTNHSIGSTQSTPCSTSSMA) are disordered. A compositionally biased stretch (polar residues) spans 635–653 (TNHSIGSTQSTPCSTSSMA). Phosphoserine; by TGFBR1 is present on residues Ser-641 and Ser-644.

In terms of assembly, homodimer; disulfide-linked. Forms a heteromeric complex with the signaling receptors for transforming growth factor-beta: TGFBR1 and/or TGFBR2. Interacts with TGFB1. It is able to bind TGFB1 and TGFB2 with high affinity, but not TGFB3. Interacts with GDF2, forming a heterotetramer with a 2:2 stoichiometry. Interacts with ACVRL1. Can form a heteromeric complex with GDF2 and ACVRL1. Interacts with BMP10. Interacts with DYNLT4. Interacts with ARRB2. As to expression, detected on blood vessels (at protein level). Detected on adult pulmonary artery, capillaries supporting the heart muscle and lung alveolar capillary endothelial cells. Endoglin is restricted to endothelial cells in all tissues except bone marrow and is also found in stromal cells within the connective tissue of intestine, stomach, heart, skeletal muscle, uterus, ovary, oviduct, testis and thymus.

It localises to the cell membrane. Functionally, vascular endothelium glycoprotein that plays an important role in the regulation of angiogenesis. Required for normal structure and integrity of adult vasculature. Regulates the migration of vascular endothelial cells. Required for normal extraembryonic angiogenesis and for embryonic heart development. May regulate endothelial cell shape changes in response to blood flow, which drive vascular remodeling and establishment of normal vascular morphology during angiogenesis. May play a role in the binding of endothelial cells to integrins. Acts as a TGF-beta coreceptor and is involved in the TGF-beta/BMP signaling cascade that ultimately leads to the activation of SMAD transcription factors. Required for GDF2/BMP9 signaling through SMAD1 in endothelial cells and modulates TGFB1 signaling through SMAD3. The polypeptide is Endoglin (Eng) (Mus musculus (Mouse)).